The chain runs to 259 residues: Protein POLYCHOME (259 aa).

Residues lysine 236–arginine 259 form a disordered region.

In terms of assembly, interacts with APC/C activators such as APC5, FZR2, FZR3, CDC20.1 and CDC20.5. As to expression, expressed mainly in actively dividing cells (e.g. central cylinder of the root tip, young leaves and vascular tissues).

The protein resides in the nucleus. Functionally, negative regulator of the anaphase-promoting complex/cyclosome (APC/C) ubiquitin ligase required for proper mitotic progression and cell fate determination; inhibits premature cell differentiation. Prevents DNA endoreplication by promoting the maintenance of the mitotic state by preferentially inhibiting APC/C(FZR) and triggering cyclins accumulation (e.g. CYCB1-1, CYCB1-2 and CYCA2-3) in a temporal manner. Required for megagametophyte and endosperm development. Counteracts the activity of CCS52A1 thus inhibiting the turnover of CYCA2-3. Confers immunity to bacterial pathogens (e.g. Pseudomonas syringae pv. tomato DC3000), which is associated with increased expression of disease resistance (R) genes. In Arabidopsis thaliana (Mouse-ear cress), this protein is Protein POLYCHOME (PYM).